The following is a 635-amino-acid chain: Threonine--tRNA ligase (635 aa).

The TGS domain maps to 1 to 61 (MINISFPDGS…ENDCKLRILT (61 aa)). Residues 242–533 (DHRKLGKELD…LIEEYAGCFP (292 aa)) form a catalytic region. Zn(2+)-binding residues include Cys-333, His-384, and His-510.

This sequence belongs to the class-II aminoacyl-tRNA synthetase family. In terms of assembly, homodimer. It depends on Zn(2+) as a cofactor.

It localises to the cytoplasm. The catalysed reaction is tRNA(Thr) + L-threonine + ATP = L-threonyl-tRNA(Thr) + AMP + diphosphate + H(+). Catalyzes the attachment of threonine to tRNA(Thr) in a two-step reaction: L-threonine is first activated by ATP to form Thr-AMP and then transferred to the acceptor end of tRNA(Thr). Also edits incorrectly charged L-seryl-tRNA(Thr). The chain is Threonine--tRNA ligase from Rickettsia akari (strain Hartford).